Reading from the N-terminus, the 516-residue chain is Circadian clock oscillator protein KaiC (516 aa).

2 KaiC domains span residues 1–244 and 258–516; these read MNQP…INIF and ARIS…TLPE. ATP contacts are provided by Gly46, Thr47, Gly48, Lys49, Thr50, Leu51, Ser86, Lys221, Leu222, Arg223, Thr225, His227, Thr237, Thr287, Gly288, Thr289, Gly290, Lys291, Thr292, and Leu293. Thr50 lines the Mg(2+) pocket. Thr292 is a Mg(2+) binding site. Position 315 (Glu315) interacts with Mg(2+). An ATP-binding site is contributed by Trp328. Phosphoserine; by autocatalysis is present on Ser428. Phosphothreonine; by autocatalysis is present on Thr429. ATP is bound by residues Arg448, Lys454, Met455, Arg456, Ser458, His460, and Lys462.

This sequence belongs to the KaiC family. In terms of assembly, homohexamer; hexamerization is dependent on ATP-binding. The KaiABC complex composition changes during the circadian cycle to control KaiC phosphorylation. Complexes KaiC(6), KaiA(2-4):KaiC(6), KaiB(6):KaiC(6) and KaiC(6):KaiB(6):KaiA(12) are among the most important forms, many form cooperatively. KaiC interacts with SasA, activating its autokinase function and leading to RpaA activation. Requires Mg(2+) as cofactor. In terms of processing, phosphorylated on serine and threonine residues by autocatalysis. Has a 4 step phosphorylation cycle; the autokinase acts first on Thr-429, then Ser-428. When Ser-428 is modified KaiC switches to an autophosphatase mode, acting first on phospho-Thr-429 then phospho-Ser-428.

The catalysed reaction is L-seryl-[protein] + ATP = O-phospho-L-seryl-[protein] + ADP + H(+). It catalyses the reaction L-threonyl-[protein] + ATP = O-phospho-L-threonyl-[protein] + ADP + H(+). The enzyme catalyses ATP + H2O = ADP + phosphate + H(+). The interaction with KaiA enhances its phosphorylation status, while the interaction with KaiB decreases it. In terms of biological role, central component of the KaiABC oscillator complex, which constitutes the main circadian regulator in cyanobacteria. Complex composition changes during the circadian cycle to control KaiC phosphorylation. KaiA stimulates KaiC autophosphorylation, while KaiB sequesters KaiA, leading to KaiC autodephosphorylation. Clock output pathways impact the RpaA transcriptional regulator. KaiC enhances the autophosphorylation activity of SasA, which then transfers its phosphate group to RpaA to activate it. KaiB and KaiC together enhance the phospho-RpaA dephosphatase activity of CikA. Its function is as follows. Has a weak, temperature-independent ATPase activity; ATPase activity defines the circadian period. The phosphorylation state of KaiC modulates its ATPase activity and effects KaiB binding. This chain is Circadian clock oscillator protein KaiC, found in Picosynechococcus sp. (strain ATCC 27264 / PCC 7002 / PR-6) (Agmenellum quadruplicatum).